A 320-amino-acid polypeptide reads, in one-letter code: Aspartate carbamoyltransferase catalytic subunit (320 aa).

2 residues coordinate carbamoyl phosphate: Arg53 and Thr54. Position 82 (Lys82) interacts with L-aspartate. Carbamoyl phosphate contacts are provided by Arg103, His131, and Gln134. L-aspartate-binding residues include Arg164 and Arg227. Leu266 and Pro267 together coordinate carbamoyl phosphate.

Belongs to the aspartate/ornithine carbamoyltransferase superfamily. ATCase family. Heterododecamer (2C3:3R2) of six catalytic PyrB chains organized as two trimers (C3), and six regulatory PyrI chains organized as three dimers (R2).

The enzyme catalyses carbamoyl phosphate + L-aspartate = N-carbamoyl-L-aspartate + phosphate + H(+). It participates in pyrimidine metabolism; UMP biosynthesis via de novo pathway; (S)-dihydroorotate from bicarbonate: step 2/3. In terms of biological role, catalyzes the condensation of carbamoyl phosphate and aspartate to form carbamoyl aspartate and inorganic phosphate, the committed step in the de novo pyrimidine nucleotide biosynthesis pathway. The sequence is that of Aspartate carbamoyltransferase catalytic subunit from Bifidobacterium adolescentis (strain ATCC 15703 / DSM 20083 / NCTC 11814 / E194a).